We begin with the raw amino-acid sequence, 990 residues long: Membrane alanyl aminopeptidase (990 aa).

A signal peptide spans 1-15 (FTIFLGVALLQGVLT). Residues 16–35 (LSPIPVPEEEWAEFSRMLRD) constitute a propeptide, activation peptide. A glycan (N-linked (GlcNAc...) asparagine) is linked at Asn295. 321–325 (GAMEN) provides a ligand contact to substrate. His357 is a binding site for Zn(2+). The active-site Proton acceptor is the Glu358. The Zn(2+) site is built by His361 and Glu380. Asn609, Asn623, and Asn752 each carry an N-linked (GlcNAc...) asparagine glycan. Gly968 carries the GPI-anchor amidated glycine lipid modification. Residues 969–990 (SGNIAALSVVSLLVTLAINMVA) constitute a propeptide, removed in mature form.

The protein belongs to the peptidase M1 family. Zn(2+) is required as a cofactor. Midgut brush-border membrane.

It localises to the cell membrane. Binds to the B.thuringiensis toxin, CryIA(C). This is Membrane alanyl aminopeptidase from Manduca sexta (Tobacco hawkmoth).